The following is a 943-amino-acid chain: Glutamate receptor ionotropic, NMDA 1 (943 aa).

Residues 1-20 (MSTMRLLTLALLFSCSFARA) form the signal peptide. Topologically, residues 21–580 (ACDPKIVNIG…TLDSFMQPFQ (560 aa)) are extracellular. Residues Asn-61, Asn-224, Asn-260, Asn-297, Asn-321, Asn-371, Asn-389, Asn-461, Asn-492, and Asn-512 are each glycosylated (N-linked (GlcNAc...) asparagine). An intrachain disulfide couples Cys-79 to Cys-329. Disulfide bonds link Cys-441/Cys-475 and Cys-457/Cys-476. Pro-537, Thr-539, and Arg-544 together coordinate glycine. Residues 581–601 (STLWLLVGLSVHVVAVMLYLL) traverse the membrane as a helical segment. The Cytoplasmic segment spans residues 602-623 (DRFSPFGRFKVNSEEEEEDALT). The discontinuously helical intramembrane region spans 624–645 (LSSAMWFSWGVLLNSGIGEGAP). Residues 624 to 645 (LSSAMWFSWGVLLNSGIGEGAP) are pore-forming. The Cytoplasmic segment spans residues 646–651 (RSFSAR). A helical transmembrane segment spans residues 652–668 (ILGMVWAGFAMIIVASY). At 669 to 833 (TANLAAFLVL…NAPATLTFEN (165 aa)) the chain is on the extracellular side. Residue Asn-695 is glycosylated (N-linked (GlcNAc...) asparagine). Residues Ser-709 and Asp-753 each contribute to the glycine site. A disulfide bond links Cys-765 and Cys-819. An N-linked (GlcNAc...) asparagine glycan is attached at Asn-792. A helical transmembrane segment spans residues 834 to 854 (MAGVFMLVAGGIVAGIFLIFI). Residues 855–943 (EIAYKRHKDA…LSDPSVSTVV (89 aa)) are Cytoplasmic-facing. Phosphoserine is present on residues Ser-910, Ser-911, Ser-917, and Ser-918.

Belongs to the glutamate-gated ion channel (TC 1.A.10.1) family. NR1/GRIN1 subfamily. Heterotetramer; the NMDAR subunits are modular and harbor tiered domains that function in concert to regulate opening and closing of the cation-selective ion channel pore. Forms heterotetrameric channels composed of two GluN1/zeta subunits (GRIN1), and two identical GluN2/epsilon subunits (GRIN2A, GRIN2B, GRIN2C or GRIN2D) or GluN3 subunits (GRIN3A or GRIN3B) (in vitro). Can also form heterotetrameric channels that contain at least two GluN1 subunits and at least two different GluN2 subunits (or a combination of one GluN2 and one GluN3 subunits) (in vitro). In vivo, the subunit composition may vary in function of the expression levels of the different subunits. Found in a complex with GRIN2A or GRIN2B, GRIN3A and PPP2CB. Found in a complex with GRIN2A or GRIN2B and GRIN3B. Interacts with SNX27 (via PDZ domain); the interaction is required for recycling to the plasma membrane when endocytosed and prevent degradation in lysosomes. Interacts with DLG4 and MPDZ. Interacts with LRFN1 and LRFN2. Interacts with MYZAP. Found in a complex with DLG4 and PRR7. Found in a complex with GRIN2B and PRR7. Interacts with PRR7; the interaction is reduced following NMDA receptor activity. Post-translationally, NMDA is probably regulated by C-terminal phosphorylation of an isoform of GRIN1 by PKC. Dephosphorylated on Ser-897 probably by protein phosphatase 2A (PPP2CB). Its phosphorylated state is influenced by the formation of the NMDAR-PPP2CB complex and the NMDAR channel activity.

Its subcellular location is the cell membrane. It is found in the postsynaptic cell membrane. It localises to the postsynaptic density membrane. The protein localises to the synaptic cell membrane. The enzyme catalyses Ca(2+)(in) = Ca(2+)(out). It carries out the reaction Na(+)(in) = Na(+)(out). It catalyses the reaction K(+)(in) = K(+)(out). Its function is as follows. Component of N-methyl-D-aspartate (NMDA) receptors (NMDARs) that function as heterotetrameric, ligand-gated cation channels with high calcium permeability and voltage-dependent block by Mg(2+). NMDARs participate in synaptic plasticity for learning and memory formation by contributing to the long-term potentiation (LTP). Channel activation requires binding of the neurotransmitter L-glutamate to the GluN2 subunit, glycine or D-serine binding to the GluN1 subunit, plus membrane depolarization to eliminate channel inhibition by Mg(2+). NMDARs mediate simultaneously the potasium efflux and the influx of calcium and sodium. Each GluN2 or GluN3 subunit confers differential attributes to channel properties, including activation, deactivation and desensitization kinetics, pH sensitivity, Ca2(+) permeability, and binding to allosteric modulators. The GluN3 subunits confer distinctive ion channel activation mechanism, which relies exclusively on glycine and does not involve glutamate. In Canis lupus familiaris (Dog), this protein is Glutamate receptor ionotropic, NMDA 1.